A 465-amino-acid chain; its full sequence is ATP synthase subunit beta (465 aa).

148–155 is a binding site for ATP; it reads GGAGVGKT.

This sequence belongs to the ATPase alpha/beta chains family. F-type ATPases have 2 components, CF(1) - the catalytic core - and CF(0) - the membrane proton channel. CF(1) has five subunits: alpha(3), beta(3), gamma(1), delta(1), epsilon(1). CF(0) has three main subunits: a(1), b(2) and c(9-12). The alpha and beta chains form an alternating ring which encloses part of the gamma chain. CF(1) is attached to CF(0) by a central stalk formed by the gamma and epsilon chains, while a peripheral stalk is formed by the delta and b chains.

The protein resides in the cell inner membrane. The catalysed reaction is ATP + H2O + 4 H(+)(in) = ADP + phosphate + 5 H(+)(out). Its function is as follows. Produces ATP from ADP in the presence of a proton gradient across the membrane. The catalytic sites are hosted primarily by the beta subunits. This chain is ATP synthase subunit beta, found in Neisseria meningitidis serogroup B (strain ATCC BAA-335 / MC58).